The following is a 290-amino-acid chain: Pantothenate synthetase (290 aa).

Residue 30–37 (MGALHEGH) participates in ATP binding. His-37 serves as the catalytic Proton donor. Gln-61 contacts (R)-pantoate. Gln-61 contributes to the beta-alanine binding site. 147–150 (GEKD) serves as a coordination point for ATP. Residue Gln-153 coordinates (R)-pantoate. ATP is bound by residues Val-176 and 184–187 (KSSR).

It belongs to the pantothenate synthetase family. In terms of assembly, homodimer.

The protein localises to the cytoplasm. The enzyme catalyses (R)-pantoate + beta-alanine + ATP = (R)-pantothenate + AMP + diphosphate + H(+). It participates in cofactor biosynthesis; (R)-pantothenate biosynthesis; (R)-pantothenate from (R)-pantoate and beta-alanine: step 1/1. Catalyzes the condensation of pantoate with beta-alanine in an ATP-dependent reaction via a pantoyl-adenylate intermediate. The protein is Pantothenate synthetase of Chlorobium chlorochromatii (strain CaD3).